The following is a 155-amino-acid chain: Cyanate hydratase (155 aa).

Active-site residues include arginine 95, glutamate 98, and serine 121.

It belongs to the cyanase family.

The enzyme catalyses cyanate + hydrogencarbonate + 3 H(+) = NH4(+) + 2 CO2. Functionally, catalyzes the reaction of cyanate with bicarbonate to produce ammonia and carbon dioxide. This Pseudomonas syringae pv. tomato (strain ATCC BAA-871 / DC3000) protein is Cyanate hydratase.